The following is a 1809-amino-acid chain: Stereocilin (1809 aa).

A signal peptide spans 1 to 22 (MALSLQPQLLLLLSLLPQEVTS). N-linked (GlcNAc...) asparagine glycosylation is found at Asn-63, Asn-200, Asn-295, Asn-352, and Asn-364. Residues 376–426 (PATPRPPPTTPRPPPTTPQPPPTTTQPIPDTTQPPPVTPRPPPTTPQPPPS) are disordered. Composition is skewed to pro residues over residues 378-399 (TPRP…PPTT) and 407-426 (TQPP…PPPS). 10 N-linked (GlcNAc...) asparagine glycosylation sites follow: Asn-467, Asn-516, Asn-580, Asn-605, Asn-696, Asn-860, Asn-952, Asn-1000, Asn-1213, and Asn-1308.

The protein belongs to the stereocilin family. Strongly expressed in the inner ear, detected in the testis, and barely detected in the eye. Detected in the six sensory areas of the inner ear by immunofluorescence. Expressed only in the sensory hair cells and associated with the stereocilia, the stiff microvilli forming the structure for mechanoreception of sound stimulation.

It localises to the cell surface. The protein localises to the cell projection. Its subcellular location is the kinocilium. The protein resides in the stereocilium. In terms of biological role, essential to the formation of horizontal top connectors between outer hair cell stereocilia. This Mus musculus (Mouse) protein is Stereocilin (Strc).